The primary structure comprises 133 residues: UPF0225 protein BB3385 (133 aa).

This sequence belongs to the UPF0225 family.

In Bordetella bronchiseptica (strain ATCC BAA-588 / NCTC 13252 / RB50) (Alcaligenes bronchisepticus), this protein is UPF0225 protein BB3385.